A 1620-amino-acid polypeptide reads, in one-letter code: DNA (cytosine-5)-methyltransferase 1 (1620 aa).

A disordered region spans residues 1-21 (MPARTAPARVPALASPAGSLP). The segment at 1–120 (MPARTAPARV…SRPTWRAEMA (120 aa)) is interaction with DMAP1. The interval 1–145 (MPARTAPARV…RRSKSDSDTL (145 aa)) is interaction with DNMT3A. 2 interaction with the PRC2/EED-EZH2 complex regions span residues 1-343 (MPAR…SERK) and 305-609 (APET…RVMG). Position 15 is a phosphoserine (Ser15). Residues 16-109 (PAGSLPDHVR…TQKANGCPAN (94 aa)) enclose the DMAP1-binding domain. Residue Lys70 is modified to N6,N6-dimethyllysine; by EHMT2. The segment at 96-369 (THTLTQKANG…PECGQHLDDP (274 aa)) is disordered. Residues 126–137 (PRSRPKPRGPRR) are compositionally biased toward basic residues. Ser138 is modified (phosphoserine). An N6-methyllysine; by SETD7 modification is found at Lys139. Ser140 is subject to Phosphoserine. Over residues 144–155 (TLSVETSPSSVA) the composition is skewed to polar residues. Ser146 bears the Phosphoserine; by CK1 mark. Residues 147–217 (VETSPSSVAT…SGAAAAVEKL (71 aa)) form an interaction with DNMT3B region. Ser150 and Ser152 each carry phosphoserine. The segment at 161–172 (RQTTITAHFTKG) is interaction with PCNA. Thr164 is subject to Phosphothreonine. Lys171 carries the N6-acetyllysine modification. Positions 175–202 (KRKPKEESEEGNSAESAAEERDQDKKRR) match the Nuclear localization signal motif. The segment covering 192-205 (AEERDQDKKRRVVD) has biased composition (basic and acidic residues). A Phosphoserine modification is found at Ser240. Composition is skewed to basic and acidic residues over residues 246–267 (RELS…PETH) and 286–300 (QPRD…KEAE). At Lys255 the chain carries N6-acetyllysine; alternate. Lys255 participates in a covalent cross-link: Glycyl lysine isopeptide (Lys-Gly) (interchain with G-Cter in SUMO2); alternate. Acidic residues predominate over residues 308–317 (TPEDRDEDER). Residues 328 to 556 (KLESHTVPVQ…NVNRFTEDSL (229 aa)) form a DNA replication foci-targeting sequence region. Positions 359 and 362 each coordinate Zn(2+). Lys372 carries the post-translational modification N6-acetyllysine. 2 residues coordinate Zn(2+): Cys420 and His424. A phosphoserine mark is found at Ser515 and Ser555. Residues 649 to 695 (NAMKRRRCGVCEVCQQPECGKCKACKDMVKFGGTGRSKQACLKRRCP) form a CXXC-type zinc finger. Zn(2+) contacts are provided by Cys656, Cys659, Cys662, Cys667, Cys670, Cys673, Cys689, and Cys694. Positions 696–757 (NLAVKEADDD…TYYQKVSIDE (62 aa)) are autoinhibitory linker. An interaction with HDAC1 region spans residues 696-813 (NLAVKEADDD…TDTVLGATSD (118 aa)). Over residues 702-713 (ADDDEEADDDVS) the composition is skewed to acidic residues. Residues 702-732 (ADDDEEADDDVSEMPSPKKLHQGKKKKQNKD) form a disordered region. Residues Ser713 and Ser717 each carry the phosphoserine modification. Over residues 719 to 730 (KKLHQGKKKKQN) the composition is skewed to basic residues. Ser735 is modified (phosphoserine). An N6-acetyllysine modification is found at Lys752. In terms of domain architecture, BAH 1 spans 758–884 (EMLEVGDCVS…QEYARFESPP (127 aa)). Ser882 carries the phosphoserine modification. Lys895, Lys961, Lys965, and Lys979 each carry N6-acetyllysine. A BAH 2 domain is found at 976–1103 (HYRKYSDYIK…SKTKNFEDPP (128 aa)). Positions 1097-1136 (KNFEDPPNHARSPGNKGKGKGKGKGKGKHQVSEPKEPEAA) are disordered. 6 tandem repeats follow at residues 1112-1113 (KG), 1114-1115 (KG), 1116-1117 (KG), 1118-1119 (KG), 1120-1121 (KG), and 1122-1123 (KG). The 7 X 2 AA tandem repeats of K-G stretch occupies residues 1112-1125 (KGKGKGKGKGKGKH). Residues 1113–1125 (GKGKGKGKGKGKH) show a composition bias toward basic residues. Residues Lys1114, Lys1116, Lys1118, Lys1120, Lys1122, and Lys1124 each carry the N6-acetyllysine modification. The stretch at 1124 to 1125 (KH) is one 7; approximate repeat. An interaction with the PRC2/EED-EZH2 complex region spans residues 1124–1620 (KHQVSEPKEP…KAKEEAATKD (497 aa)). A compositionally biased stretch (basic and acidic residues) spans 1126–1135 (QVSEPKEPEA). The SAM-dependent MTase C5-type domain maps to 1142–1601 (LRTLDVFSGC…LEIKLCLLSS (460 aa)). The catalytic stretch occupies residues 1142-1620 (LRTLDVFSGC…KAKEEAATKD (479 aa)). Residues Ser1149, 1153–1154 (GL), 1171–1172 (EM), and 1193–1194 (DC) contribute to the S-adenosyl-L-methionine site. Residue Cys1229 is part of the active site. Residues Lys1352 and Lys1418 each carry the N6-acetyllysine modification. S-adenosyl-L-methionine is bound at residue Val1582. Residue Lys1611 forms a Glycyl lysine isopeptide (Lys-Gly) (interchain with G-Cter in SUMO2) linkage.

This sequence belongs to the class I-like SAM-binding methyltransferase superfamily. C5-methyltransferase family. In terms of assembly, homodimer. Forms a stable complex with E2F1, BB1 and HDAC1. Forms a complex with DMAP1 and HDAC2, with direct interaction. Interacts with the PRC2/EED-EZH2 complex. Probably part of a corepressor complex containing ZNF304, TRIM28, SETDB1 and DNMT1. Interacts with UHRF1; promoting its recruitment to hemimethylated DNA. Interacts with USP7, promoting its deubiquitination. Interacts with BAZ2A/TIP5. Interacts with PCNA. Interacts with MBD2 and MBD3. Interacts with DNMT3A and DNMT3B. Interacts with UBC9. Interacts with HDAC1. Interacts with CSNK1D. Interacts with SIRT7. Interacts with ZNF263; recruited to the SIX3 promoter along with other proteins involved in chromatin modification and transcriptional corepression where it contributes to transcriptional repression. Interacts with L3MBTL3 and DCAF5; the interaction requires DNMT1 methylation at Lys-139 and is necessary to target DNMT1 for ubiquitination by the CRL4-DCAF5 E3 ubiquitin ligase complex and proteasomal degradation. Interacts with PHF20L1; the interaction requires DNMT1 methylation at Lys-139 and protects DNMT1 from ubiquitination and proteasomal degradation. Sumoylated; sumoylation increases activity. Post-translationally, phosphorylation at Ser-146 by CK1 reduces DNA-binding activity. In terms of processing, acetylation on multiple lysines, mainly by KAT2B/PCAF, regulates cell cycle G(2)/M transition. Deacetylation of Lys-1352 and Lys-1418 by SIRT1 increases methyltransferase activity. Phosphorylation of Ser-152 by CDKs is important for enzymatic activity and protein stability. Phosphorylation of Ser-140 by AKT1 prevents methylation by SETD7 thereby increasing DNMT1 stability. Post-translationally, methylation at Lys-139 by SETD7 is necessary for the regulation of DNMT1 proteasomal degradation. In terms of processing, ubiquitinated by UHRF1; interaction with USP7 counteracts ubiquitination by UHRF1 by promoting deubiquitination and preventing degradation by the proteasome. As to expression, isoform 1 is expressed in embryonic stem cells and in somatic tissues. Isoform 2 is expressed in oocytes, preimplantation embryos, testis and in skeletal muscle during myogenesis.

The protein localises to the nucleus. Its subcellular location is the cytoplasm. It carries out the reaction a 2'-deoxycytidine in DNA + S-adenosyl-L-methionine = a 5-methyl-2'-deoxycytidine in DNA + S-adenosyl-L-homocysteine + H(+). Allosterically regulated. The binding of 5-methylcytosine-containing DNA to the N-terminal parts of DNMT1 causes an allosteric activation of the catalytic domain by a direct interaction of its Zn-binding domain with the catalytic domain. Its function is as follows. Methylates CpG residues. Preferentially methylates hemimethylated DNA. Associates with DNA replication sites in S phase maintaining the methylation pattern in the newly synthesized strand, that is essential for epigenetic inheritance. Associates with chromatin during G2 and M phases to maintain DNA methylation independently of replication. It is responsible for maintaining methylation patterns established in development. DNA methylation is coordinated with methylation of histones. Mediates transcriptional repression by direct binding to HDAC2. In association with DNMT3B and via the recruitment of CTCFL/BORIS, involved in activation of BAG1 gene expression by modulating dimethylation of promoter histone H3 at H3K4 and H3K9. Probably forms a corepressor complex required for activated KRAS-mediated promoter hypermethylation and transcriptional silencing of tumor suppressor genes (TSGs) or other tumor-related genes in colorectal cancer (CRC) cells. Also required to maintain a transcriptionally repressive state of genes in undifferentiated embryonic stem cells (ESCs). Associates at promoter regions of tumor suppressor genes (TSGs) leading to their gene silencing. Promotes tumor growth. This chain is DNA (cytosine-5)-methyltransferase 1 (Dnmt1), found in Mus musculus (Mouse).